We begin with the raw amino-acid sequence, 804 residues long: Phenylalanine--tRNA ligase beta subunit (804 aa).

The region spanning 39-147 is the tRNA-binding domain; that stretch reads GEGLDSVVTA…PDCEPGQPVF (109 aa). The 80-residue stretch at 401–480 folds into the B5 domain; that stretch reads LAERKVTLAV…RLNGYDNIPV (80 aa). D458, D464, E467, and E468 together coordinate Mg(2+). The FDX-ACB domain occupies 711-804; the sequence is SRFPQVARDS…LIAKLGAEIR (94 aa).

The protein belongs to the phenylalanyl-tRNA synthetase beta subunit family. Type 1 subfamily. As to quaternary structure, tetramer of two alpha and two beta subunits. The cofactor is Mg(2+).

The protein resides in the cytoplasm. The enzyme catalyses tRNA(Phe) + L-phenylalanine + ATP = L-phenylalanyl-tRNA(Phe) + AMP + diphosphate + H(+). The sequence is that of Phenylalanine--tRNA ligase beta subunit from Syntrophotalea carbinolica (strain DSM 2380 / NBRC 103641 / GraBd1) (Pelobacter carbinolicus).